The chain runs to 457 residues: Prenyltransferase ucdE (457 aa).

Dimethylallyl diphosphate contacts are provided by Arg106, Lys198, Lys277, Tyr279, Tyr382, Tyr447, and Tyr451.

The protein belongs to the tryptophan dimethylallyltransferase family.

It functions in the pathway secondary metabolite biosynthesis. In terms of biological role, nonribosomal peptide synthetase that mediates the biosynthesis of usterphenyllins and uscandidusins, p-terphenyl derivatives. Within the pathway, ucdE prenylates position C-5 of ring A of 3,15-dihydroxyterphenyllin to produce forms usterphenyllin B. UcdE further prenylates position C-14 of ring C of usterphenyllin B to form usterphenyllin A. The pathway begin with the biosynthesis of 4-hydroxyphenylpyruvate (HPPA) from L-tyrosine, possibly by the aminotransferase ucdG. The nonribosomal peptide synthetase ucdA then condenses two HPPA units to produce atromentin. The key step in this pathway is the reduction and dehydration of atromentin to form a terphenyl triol intermediate, performed by the NAD-dependent dehydrogenase ucdB. Further O-methylation by the methyltransferase ucdC forms terphenyllin carrying two methoxy moieties at C-9 and C-12, and subsequent dihydroxylation at C-3 of ring A and C-15 of ring C by the flavin-dependent oxygenase ucdD leads to 3,15-dihydroxyterphenyllin. Prenylation by ucdE at position C-5 of ring A forms usterphenyllin B, and is followed by a second prenylation at position C-14 of ring C to form usterphenyllin A. The following furan ring formation that leads to uscandidusins A and B was proven to be an unexpected spontaneous non-enzymatic reaction. This Aspergillus ustus protein is Prenyltransferase ucdE.